Reading from the N-terminus, the 212-residue chain is 3-oxo-tetronate 4-phosphate decarboxylase (212 aa).

E79 acts as the Proton acceptor in catalysis. E79, H98, and H100 together coordinate Zn(2+). Y125 functions as the Proton donor in the catalytic mechanism. Residue H165 coordinates Zn(2+).

Belongs to the aldolase class II family. AraD/FucA subfamily. Requires Zn(2+) as cofactor.

It carries out the reaction 3-dehydro-4-O-phospho-D-erythronate + H(+) = dihydroxyacetone phosphate + CO2. The enzyme catalyses 3-dehydro-4-O-phospho-L-erythronate + H(+) = dihydroxyacetone phosphate + CO2. Functionally, catalyzes the decarboxylation of 3-oxo-tetronate 4-phosphate to dihydroxyacetone phosphate (DHAP) and CO(2). This is 3-oxo-tetronate 4-phosphate decarboxylase from Escherichia coli (strain K12).